Here is a 537-residue protein sequence, read N- to C-terminus: Cryptic loci regulator 2 (537 aa).

Residues 96 to 116 (VSARHVRPNPKSSKDTLEKQP) are disordered. The segment covering 107–116 (SSKDTLEKQP) has biased composition (basic and acidic residues).

Interacts with clr3.

The protein resides in the nucleus. Its subcellular location is the chromosome. The protein localises to the centromere. It is found in the telomere. Required for deacetylation in the mating-type region and the centromere. Acts upstream of the histone deacetylases to promote transcriptional silencing. Required for proper positioning of nucleosomes at heterochromatic loci and for transcriptional gene silencing (TGS) function of the Snf2/Hdac-containing repressor complex (SHREC). The chain is Cryptic loci regulator 2 (clr2) from Schizosaccharomyces pombe (strain 972 / ATCC 24843) (Fission yeast).